Here is a 238-residue protein sequence, read N- to C-terminus: C-reactive protein (238 aa).

An N-terminal signal peptide occupies residues 1–16; sequence MERFALWFIFLAGSLA. The residue at position 17 (glutamine 17) is a Pyrrolidone carboxylic acid. The region spanning 21-223 is the Pentraxin (PTX) domain; sequence VGNVFLFPKP…QATTQPKRQC (203 aa). Residues cysteine 52 and cysteine 113 are joined by a disulfide bond. Residues aspartate 76, asparagine 77, glutamate 154, glutamine 155, aspartate 156, and glutamine 166 each coordinate Ca(2+).

Belongs to the pentraxin family. In terms of assembly, homodimer; disulfide-linked. It is not known if it assembles into a pentraxin (or pentaxin) structure. Pentaxins have a discoid arrangement of 5 non-covalently bound subunits. Ca(2+) serves as cofactor. In terms of processing, cys-89 or Cys-223 or Cys-236 could be involved in interchain disulfide linkage.

The protein resides in the secreted. In terms of biological role, displays several functions associated with host defense: it promotes agglutination, bacterial capsular swelling, phagocytosis, and complement fixation through its calcium-dependent binding to phosphorylcholine. The sequence is that of C-reactive protein (crp) from Xenopus laevis (African clawed frog).